The primary structure comprises 191 residues: MGKKTKRTADSSSSEDEEEYVVEKVLDRRVVKGQVEYLLKWKGFSEEHNTWEPEKNLDCPELISEFMKKYKKMKEGENNKPREKSESNKRKSNFSNSADDIKSKKKREQSNDIARGFERGLEPEKIIGATDSCGDLMFLMKWKDTDEADLVLAKEANVKCPQIVIAFYEERLTWHAYPEDAENKEKETAKS.

A phosphoserine mark is found at serine 11, serine 12, serine 13, and serine 14. The Chromo 1 domain maps to 20 to 78; that stretch reads YVVEKVLDRRVVKGQVEYLLKWKGFSEEHNTWEPEKNLDCPELISEFMKKYKKMKEGEN. Residue lysine 32 forms a Glycyl lysine isopeptide (Lys-Gly) (interchain with G-Cter in SUMO2) linkage. The residue at position 40 (lysine 40) is an N6-acetyllysine. Residues 70-117 form a disordered region; sequence YKKMKEGENNKPREKSESNKRKSNFSNSADDIKSKKKREQSNDIARGF. Over residues 73 to 89 the composition is skewed to basic and acidic residues; the sequence is MKEGENNKPREKSESNK. A Glycyl lysine isopeptide (Lys-Gly) (interchain with G-Cter in SUMO2) cross-link involves residue lysine 91. 3 positions are modified to phosphoserine: serine 92, serine 95, and serine 97. Residues lysine 102, lysine 106, lysine 154, and lysine 184 each participate in a glycyl lysine isopeptide (Lys-Gly) (interchain with G-Cter in SUMO2) cross-link. The region spanning 121 to 179 is the Chromo 2; shadow subtype domain; it reads LEPEKIIGATDSCGDLMFLMKWKDTDEADLVLAKEANVKCPQIVIAFYEERLTWHAYPE.

As to quaternary structure, homodimer. Interacts with histone H3 methylated at 'Lys-9'. Interacts (via Chromo 2; shadow subtype domain) with the MIS12 complex subunit NSL1; the interaction is direct, involves dimeric CBX5, and occurs during interphase. Interacts with POGZ; POGZ and PXVXL motif-containing proteins such as INCENP and TRIM28 compete for interaction with CBX5. Interacts with LRIF1 (via PxVxL motif). Interacts with INCENP. Interacts with TRIM24. Interacts (via the chromoshadow domain) with ATRX; the interaction is direct. Interacts (via the chromoshadow domain) with CHAF1A; the interaction is direct. Interacts (via the chromoshadow domain) with LBR; the interaction is direct. Interacts (via the chromoshadow domain) with NIPBL; the interaction is direct. Interacts (via the chromoshadow domain) with SP100; the interaction is direct. Interacts (via the chromoshadow domain) with STAM2; the interaction is direct. Interacts (via the chromoshadow domain) with TRIM28; the interaction is direct. Interacts (via the chromoshadow domain) with CBX3; the interaction is direct. Interacts with PRR14 (via N-terminus). Interacts with RRP1B. Interacts with HNRNPU (via C-terminus); this interaction is, at least in part, RNA-dependent. Interacts with ZNF263; recruited to the SIX3 promoter along with other proteins involved in chromatin modification and transcriptional corepression where it contributes to transcriptional repression. Interacts with AURKB during mitosis. Interacts with CHAMP1. Interacts with BAHD1. Interacts with HP1BP3. Interacts with CHD3. Interacts with CHD4. Interacts with SMYD5. Interacts with KMT5B. Interacts with KMT5C. (Microbial infection) Interacts with JC virus agnoprotein; this interaction induces the dissociation of CBX5 from LBR, resulting in destabilization of the nuclear envelope. Phosphorylation of HP1 and LBR may be responsible for some of the alterations in chromatin organization and nuclear structure which occur at various times during the cell cycle. Phosphorylated during interphase and possibly hyper-phosphorylated during mitosis. Post-translationally, ubiquitinated.

The protein resides in the nucleus. It localises to the chromosome. Its subcellular location is the centromere. Its function is as follows. Component of heterochromatin that recognizes and binds histone H3 tails methylated at 'Lys-9' (H3K9me), leading to epigenetic repression. In contrast, it is excluded from chromatin when 'Tyr-41' of histone H3 is phosphorylated (H3Y41ph). May contribute to the association of heterochromatin with the inner nuclear membrane by interactions with the lamin-B receptor (LBR). Involved in the formation of kinetochore through interaction with the MIS12 complex subunit NSL1. Required for the formation of the inner centromere. This chain is Chromobox protein homolog 5 (CBX5), found in Homo sapiens (Human).